We begin with the raw amino-acid sequence, 187 residues long: Homeobox protein engrailed-like ceh-16 (187 aa).

Disordered stretches follow at residues 14–43 (PYPCPSPTISTPATSPSSISPTFASPNGTP), 60–100 (SDRP…DQLD), and 144–167 (KSTSSVPRDRCSSVTPNPHNHPSI). Residues 20–39 (PTISTPATSPSSISPTFASP) are compositionally biased toward low complexity. A DNA-binding region (homeobox) is located at residues 87-146 (EKRPRTAFTGDQLDRLKTEFRESRYLTEKRRQELAHELGLNESQIKIWFQNKRAKLKKST). Positions 145–163 (STSSVPRDRCSSVTPNPHN) are enriched in polar residues.

The protein belongs to the engrailed homeobox family. In terms of tissue distribution, expressed in seam cells.

Its subcellular location is the nucleus. It localises to the cytoplasm. Functionally, transcriptional regulator which binds to DNA to regulate gene expression and promote seam cell development and differentiation during embryogenesis. Plays a role in maintaining the boundaries between the lateral rows of seam cells and the ventral and dorsal row of epidermal cells during embryonic development. Negatively regulates the expression of the fusion effector protein eff-1 to prevent seam cell fusion with the dorsal and ventral epidermal cells during embryonic elongation. Positively regulates seam cell self-renewal and expansion during the L2 larval stage to promote seam cell development. This role does not seem to be via regulation of eff-1 expression. Specifically, it is required for the asymmetric division of the V5.p seam cell during the L2 larval stage, and in turn the asymmetric nuclear distribution of pop-1 in V5.p daughter cells. This is Homeobox protein engrailed-like ceh-16 from Caenorhabditis elegans.